Consider the following 225-residue polypeptide: Glutathione S-transferase-like protein tpcF (225 aa).

The region spanning 4-85 (IQPITVYGKG…YLVSHYDPDH (82 aa)) is the GST N-terminal domain. A GST C-terminal domain is found at 92-225 (GSNLAALATQ…KGMADIFPST (134 aa)).

This sequence belongs to the GST superfamily. Specifically expressed in conidia.

The protein operates within secondary metabolite biosynthesis. Glutathione S-transferase-like protein; part of the gene cluster that mediates the biosynthesis of trypacidin, a mycotoxin with antiprotozoal activity and that plays a role in the infection process. The pathway begins with the synthesis of atrochrysone thioester by the polyketide synthase (PKS) tpcC. The atrochrysone carboxyl ACP thioesterase tpcB then breaks the thioester bond and releases the atrochrysone carboxylic acid from tpcC. The decarboxylase tpcK converts atrochrysone carboxylic acid to atrochrysone which is further reduced into emodin anthrone. The next step is performed by the emodin anthrone oxygenase tpcL that catalyzes the oxidation of emodinanthrone to emodin. Emodin O-methyltransferase encoded by tpcA catalyzes methylation of the 8-hydroxy group of emodin to form questin. Ring cleavage of questin by questin oxidase tpcI leads to desmethylsulochrin via several intermediates including questin epoxide. Another methylation step catalyzed by tpcM leads to the formation of sulochrin which is further converted to monomethylsulfochrin by tpcH. Finally, the tpcJ catalyzes the conversion of monomethylsulfochrin to trypacidin. Trypacidin is toxic for human pulmonary and bronchial epithelial cells by initiating the intracellular formation of nitric oxide (NO) and hydrogen peroxide (H(2)O(2)), thus triggering host necrotic cell death. The trypacidin pathway is also able to produce endocrocin via a distinct route from the endocrocin Enc pathway. The chain is Glutathione S-transferase-like protein tpcF from Aspergillus fumigatus (strain ATCC MYA-4609 / CBS 101355 / FGSC A1100 / Af293) (Neosartorya fumigata).